The sequence spans 315 residues: Aspartate carbamoyltransferase catalytic subunit (315 aa).

2 residues coordinate carbamoyl phosphate: Arg-61 and Thr-62. Lys-90 lines the L-aspartate pocket. Arg-111, His-139, and Gln-142 together coordinate carbamoyl phosphate. 2 residues coordinate L-aspartate: Arg-172 and Arg-234. Residues Leu-274 and Pro-275 each contribute to the carbamoyl phosphate site.

This sequence belongs to the aspartate/ornithine carbamoyltransferase superfamily. ATCase family. As to quaternary structure, heterooligomer of catalytic and regulatory chains.

It catalyses the reaction carbamoyl phosphate + L-aspartate = N-carbamoyl-L-aspartate + phosphate + H(+). It functions in the pathway pyrimidine metabolism; UMP biosynthesis via de novo pathway; (S)-dihydroorotate from bicarbonate: step 2/3. Its function is as follows. Catalyzes the condensation of carbamoyl phosphate and aspartate to form carbamoyl aspartate and inorganic phosphate, the committed step in the de novo pyrimidine nucleotide biosynthesis pathway. The protein is Aspartate carbamoyltransferase catalytic subunit of Hyperthermus butylicus (strain DSM 5456 / JCM 9403 / PLM1-5).